Reading from the N-terminus, the 445-residue chain is CBL-interacting serine/threonine-protein kinase 5 (445 aa).

In terms of domain architecture, Protein kinase spans 12 to 267 (YEMGRLLGKG…IPAIMRTPWL (256 aa)). ATP contacts are provided by residues 18–26 (LGKGTFAKV) and Lys41. The active-site Proton acceptor is Asp135. The interval 153-182 (DFGLSALPEQILQDGLLHTQCGTPAYVAPE) is activation loop. Position 157 is a phosphoserine (Ser157). A Phosphothreonine modification is found at Thr171. One can recognise an NAF domain in the interval 307-332 (ISPKFFNAFEFISSMSSGFDLSSLFE). The interval 336–366 (KVQSVFTSRSSATEVMEKIETVTKEMNMKVK) is PPI.

Belongs to the protein kinase superfamily. CAMK Ser/Thr protein kinase family. SNF1 subfamily. Mn(2+) is required as a cofactor.

It catalyses the reaction L-seryl-[protein] + ATP = O-phospho-L-seryl-[protein] + ADP + H(+). It carries out the reaction L-threonyl-[protein] + ATP = O-phospho-L-threonyl-[protein] + ADP + H(+). Its function is as follows. CIPK serine-threonine protein kinases interact with CBL proteins. Binding of a CBL protein to the regulatory NAF domain of CIPK protein lead to the activation of the kinase in a calcium-dependent manner. This Arabidopsis thaliana (Mouse-ear cress) protein is CBL-interacting serine/threonine-protein kinase 5 (CIPK5).